The primary structure comprises 105 residues: UPF0235 protein CT1832 (105 aa).

Belongs to the UPF0235 family.

This is UPF0235 protein CT1832 from Chlorobaculum tepidum (strain ATCC 49652 / DSM 12025 / NBRC 103806 / TLS) (Chlorobium tepidum).